We begin with the raw amino-acid sequence, 296 residues long: 4-hydroxybenzoate octaprenyltransferase (296 aa).

8 helical membrane-spanning segments follow: residues 28-48, 51-71, 102-122, 143-163, 174-194, 212-232, 233-253, and 274-294; these read IGTL…SDGI, LAVL…GCVI, LLLT…LNHL, FFPI…PMAF, AWIL…VYAM, FGRY…LLMA, VLGA…IVLL, and FLAN…HTFF.

This sequence belongs to the UbiA prenyltransferase family. The cofactor is Mg(2+).

It is found in the cell inner membrane. The enzyme catalyses all-trans-octaprenyl diphosphate + 4-hydroxybenzoate = 4-hydroxy-3-(all-trans-octaprenyl)benzoate + diphosphate. Its pathway is cofactor biosynthesis; ubiquinone biosynthesis. Catalyzes the prenylation of para-hydroxybenzoate (PHB) with an all-trans polyprenyl group. Mediates the second step in the final reaction sequence of ubiquinone-8 (UQ-8) biosynthesis, which is the condensation of the polyisoprenoid side chain with PHB, generating the first membrane-bound Q intermediate 3-octaprenyl-4-hydroxybenzoate. The polypeptide is 4-hydroxybenzoate octaprenyltransferase (Neisseria gonorrhoeae (strain ATCC 700825 / FA 1090)).